Reading from the N-terminus, the 347-residue chain is Protein RecA (347 aa).

67–74 (GPESSGKT) serves as a coordination point for ATP.

The protein belongs to the RecA family.

It is found in the cytoplasm. Functionally, can catalyze the hydrolysis of ATP in the presence of single-stranded DNA, the ATP-dependent uptake of single-stranded DNA by duplex DNA, and the ATP-dependent hybridization of homologous single-stranded DNAs. It interacts with LexA causing its activation and leading to its autocatalytic cleavage. This chain is Protein RecA, found in Sulfurovum sp. (strain NBC37-1).